A 288-amino-acid chain; its full sequence is Eukaryotic translation initiation factor 3 subunit F-2 (288 aa).

The MPN domain occupies 12–149 (VLLHPLVLFQ…TRIFCAVATG (138 aa)).

It belongs to the eIF-3 subunit F family. As to quaternary structure, component of the eukaryotic translation initiation factor 3 (eIF-3) complex. The eIF-3 complex interacts with pix.

Its subcellular location is the cytoplasm. In terms of biological role, component of the eukaryotic translation initiation factor 3 (eIF-3) complex, which is involved in protein synthesis of a specialized repertoire of mRNAs and, together with other initiation factors, stimulates binding of mRNA and methionyl-tRNAi to the 40S ribosome. The eIF-3 complex specifically targets and initiates translation of a subset of mRNAs involved in cell proliferation. The sequence is that of Eukaryotic translation initiation factor 3 subunit F-2 from Drosophila pseudoobscura pseudoobscura (Fruit fly).